We begin with the raw amino-acid sequence, 224 residues long: Glutathione S-transferase U1 (224 aa).

The 80-residue stretch at 6–85 (ESVKLLGFWA…YIDQTWKNSP (80 aa)) folds into the GST N-terminal domain. Glutathione is bound by residues 16-17 (SP), 42-43 (NK), 56-57 (KV), and 69-70 (ES). Residues 90–217 (DPYEKAMARF…EKQIERMTKI (128 aa)) enclose the GST C-terminal domain. Thr-151 carries the post-translational modification Phosphothreonine.

This sequence belongs to the GST superfamily. Tau family.

It is found in the cytoplasm. It localises to the cytosol. The enzyme catalyses RX + glutathione = an S-substituted glutathione + a halide anion + H(+). May be involved in the conjugation of reduced glutathione to a wide number of exogenous and endogenous hydrophobic electrophiles and have a detoxification role against certain herbicides. In Arabidopsis thaliana (Mouse-ear cress), this protein is Glutathione S-transferase U1 (GSTU1).